A 129-amino-acid chain; its full sequence is Small ribosomal subunit protein uS11 (129 aa).

This sequence belongs to the universal ribosomal protein uS11 family. In terms of assembly, part of the 30S ribosomal subunit. Interacts with proteins S7 and S18. Binds to IF-3.

Its function is as follows. Located on the platform of the 30S subunit, it bridges several disparate RNA helices of the 16S rRNA. Forms part of the Shine-Dalgarno cleft in the 70S ribosome. This chain is Small ribosomal subunit protein uS11, found in Caulobacter sp. (strain K31).